The primary structure comprises 338 residues: Glycerol-3-phosphate dehydrogenase [NAD(P)+] (338 aa).

NADPH contacts are provided by Ser-13, Trp-14, and Lys-108. Sn-glycerol 3-phosphate contacts are provided by Lys-108, Gly-139, and Ser-141. Ala-143 contributes to the NADPH binding site. 5 residues coordinate sn-glycerol 3-phosphate: Lys-194, Asp-247, Ser-257, Arg-258, and Asn-259. Lys-194 functions as the Proton acceptor in the catalytic mechanism. Position 258 (Arg-258) interacts with NADPH. Val-282 and Glu-284 together coordinate NADPH.

The protein belongs to the NAD-dependent glycerol-3-phosphate dehydrogenase family.

The protein localises to the cytoplasm. The enzyme catalyses sn-glycerol 3-phosphate + NAD(+) = dihydroxyacetone phosphate + NADH + H(+). It carries out the reaction sn-glycerol 3-phosphate + NADP(+) = dihydroxyacetone phosphate + NADPH + H(+). Its pathway is membrane lipid metabolism; glycerophospholipid metabolism. In terms of biological role, catalyzes the reduction of the glycolytic intermediate dihydroxyacetone phosphate (DHAP) to sn-glycerol 3-phosphate (G3P), the key precursor for phospholipid synthesis. The chain is Glycerol-3-phosphate dehydrogenase [NAD(P)+] from Streptococcus agalactiae serotype V (strain ATCC BAA-611 / 2603 V/R).